The chain runs to 255 residues: Thiazole synthase (255 aa).

K96 functions as the Schiff-base intermediate with DXP in the catalytic mechanism. Residues G157, 183-184, and 205-206 each bind 1-deoxy-D-xylulose 5-phosphate; these read AG and NT.

It belongs to the ThiG family. Homotetramer. Forms heterodimers with either ThiH or ThiS.

Its subcellular location is the cytoplasm. It catalyses the reaction [ThiS sulfur-carrier protein]-C-terminal-Gly-aminoethanethioate + 2-iminoacetate + 1-deoxy-D-xylulose 5-phosphate = [ThiS sulfur-carrier protein]-C-terminal Gly-Gly + 2-[(2R,5Z)-2-carboxy-4-methylthiazol-5(2H)-ylidene]ethyl phosphate + 2 H2O + H(+). The protein operates within cofactor biosynthesis; thiamine diphosphate biosynthesis. Its function is as follows. Catalyzes the rearrangement of 1-deoxy-D-xylulose 5-phosphate (DXP) to produce the thiazole phosphate moiety of thiamine. Sulfur is provided by the thiocarboxylate moiety of the carrier protein ThiS. In vitro, sulfur can be provided by H(2)S. The chain is Thiazole synthase from Staphylococcus saprophyticus subsp. saprophyticus (strain ATCC 15305 / DSM 20229 / NCIMB 8711 / NCTC 7292 / S-41).